Consider the following 201-residue polypeptide: Dynactin subunit 6 (201 aa).

It belongs to the dynactin subunits 5/6 family. Dynactin subunit 6 subfamily. As to quaternary structure, member of the pointed-end complex of the dynactin shoulder complex which contains dctn4, dctn5 and dctn6 subunits and Actr10. Within the complex dctn6 forms a heterodimer with dctn5. Interacts with plk1.

It localises to the cytoplasm. The protein resides in the cytoskeleton. It is found in the chromosome. Its subcellular location is the centromere. The protein localises to the kinetochore. Its function is as follows. Part of the dynactin complex that activates the molecular motor dynein for ultra-processive transport along microtubules. The sequence is that of Dynactin subunit 6 (dctn6) from Xenopus tropicalis (Western clawed frog).